The primary structure comprises 475 residues: tRNA-2-methylthio-N(6)-dimethylallyladenosine synthase (475 aa).

The MTTase N-terminal domain maps to 2 to 119 (AKLHITTWGC…LPEMINKIRG (118 aa)). The [4Fe-4S] cluster site is built by cysteine 11, cysteine 48, cysteine 82, cysteine 156, cysteine 160, and cysteine 163. Positions 142 to 374 (RAEGPTAFVS…QQRINHQAMQ (233 aa)) constitute a Radical SAM core domain. The 64-residue stretch at 377–440 (RAMLGTEQRV…TNSLRGEVVR (64 aa)) folds into the TRAM domain.

The protein belongs to the methylthiotransferase family. MiaB subfamily. Monomer. The cofactor is [4Fe-4S] cluster.

It is found in the cytoplasm. It carries out the reaction N(6)-dimethylallyladenosine(37) in tRNA + (sulfur carrier)-SH + AH2 + 2 S-adenosyl-L-methionine = 2-methylsulfanyl-N(6)-dimethylallyladenosine(37) in tRNA + (sulfur carrier)-H + 5'-deoxyadenosine + L-methionine + A + S-adenosyl-L-homocysteine + 2 H(+). Functionally, catalyzes the methylthiolation of N6-(dimethylallyl)adenosine (i(6)A), leading to the formation of 2-methylthio-N6-(dimethylallyl)adenosine (ms(2)i(6)A) at position 37 in tRNAs that read codons beginning with uridine. In Actinobacillus pleuropneumoniae serotype 3 (strain JL03), this protein is tRNA-2-methylthio-N(6)-dimethylallyladenosine synthase.